The chain runs to 364 residues: UDP-3-O-acylglucosamine N-acyltransferase (364 aa).

His-257 serves as the catalytic Proton acceptor.

This sequence belongs to the transferase hexapeptide repeat family. LpxD subfamily. In terms of assembly, homotrimer.

The enzyme catalyses a UDP-3-O-[(3R)-3-hydroxyacyl]-alpha-D-glucosamine + a (3R)-hydroxyacyl-[ACP] = a UDP-2-N,3-O-bis[(3R)-3-hydroxyacyl]-alpha-D-glucosamine + holo-[ACP] + H(+). It functions in the pathway bacterial outer membrane biogenesis; LPS lipid A biosynthesis. Functionally, catalyzes the N-acylation of UDP-3-O-acylglucosamine using 3-hydroxyacyl-ACP as the acyl donor. Is involved in the biosynthesis of lipid A, a phosphorylated glycolipid that anchors the lipopolysaccharide to the outer membrane of the cell. The chain is UDP-3-O-acylglucosamine N-acyltransferase from Paracoccus denitrificans (strain Pd 1222).